The chain runs to 150 residues: UPF0098 protein CT_736 (150 aa).

Belongs to the UPF0098 family.

The sequence is that of UPF0098 protein CT_736 from Chlamydia trachomatis serovar D (strain ATCC VR-885 / DSM 19411 / UW-3/Cx).